The primary structure comprises 36 residues: Protein YibY (36 aa).

In Escherichia coli (strain K12), this protein is Protein YibY.